Here is a 239-residue protein sequence, read N- to C-terminus: 7-cyano-7-deazaguanine synthase (239 aa).

12 to 22 contacts ATP; that stretch reads FSGGQDSATCL. Residues Cys-200, Cys-215, Cys-218, and Cys-221 each contribute to the Zn(2+) site.

Belongs to the QueC family. It depends on Zn(2+) as a cofactor.

It catalyses the reaction 7-carboxy-7-deazaguanine + NH4(+) + ATP = 7-cyano-7-deazaguanine + ADP + phosphate + H2O + H(+). It functions in the pathway purine metabolism; 7-cyano-7-deazaguanine biosynthesis. Its function is as follows. Catalyzes the ATP-dependent conversion of 7-carboxy-7-deazaguanine (CDG) to 7-cyano-7-deazaguanine (preQ(0)). The chain is 7-cyano-7-deazaguanine synthase from Hyphomonas neptunium (strain ATCC 15444).